A 497-amino-acid polypeptide reads, in one-letter code: G protein-coupled receptor gprM (497 aa).

Asn3 carries an N-linked (GlcNAc...) asparagine glycan. The next 5 membrane-spanning stretches (helical) occupy residues 66-86 (ISVAILPLCIFLLVSYAVLPV), 98-118 (FTLGICFMEASKIAFIIPLGV), 138-158 (CAFTGSLLLLGGWMVVVWSFL), 179-199 (WGALIFGWVVPAVGLTVMLIL), and 221-241 (YWIPIISFAVAALILQLATMA). An N-linked (GlcNAc...) asparagine glycan is attached at Asn259. The next 2 membrane-spanning stretches (helical) occupy residues 293-313 (VTLVLIIIANVIFFSVTFIEL) and 357-377 (LLLAVLVLLSLVGFWNFILFA). Asn421 carries N-linked (GlcNAc...) asparagine glycosylation. The disordered stretch occupies residues 428–497 (YKSPSPMVRS…APAVYREYDD (70 aa)).

Belongs to the G-protein coupled receptor GPR1/git3 family. As to quaternary structure, interacts with gpaA.

It is found in the cell membrane. Its function is as follows. G protein-coupled receptor that plays a role in conidiation and regulation of the biosynthesis of secondary metabolites such as dihydroxynaphthalene (DHN)-melanin, via interaction with the G-protein complex alpha subunit gpaA. The chain is G protein-coupled receptor gprM from Aspergillus fumigatus (strain CBS 144.89 / FGSC A1163 / CEA10) (Neosartorya fumigata).